A 116-amino-acid chain; its full sequence is Ribosome-binding factor A (116 aa).

This sequence belongs to the RbfA family. In terms of assembly, monomer. Binds 30S ribosomal subunits, but not 50S ribosomal subunits or 70S ribosomes.

Its subcellular location is the cytoplasm. Its function is as follows. One of several proteins that assist in the late maturation steps of the functional core of the 30S ribosomal subunit. Associates with free 30S ribosomal subunits (but not with 30S subunits that are part of 70S ribosomes or polysomes). Required for efficient processing of 16S rRNA. May interact with the 5'-terminal helix region of 16S rRNA. The chain is Ribosome-binding factor A from Enterococcus faecalis (strain ATCC 700802 / V583).